Here is a 399-residue protein sequence, read N- to C-terminus: Tyrosine--tRNA ligase (399 aa).

Tyrosine 36 is an L-tyrosine binding site. The short motif at 41–50 is the 'HIGH' region element; it reads PTAPSLHIGN. Residues tyrosine 166 and glutamine 170 each coordinate L-tyrosine. A 'KMSKS' region motif is present at residues 226–230; the sequence is KMGKS. Position 229 (lysine 229) interacts with ATP. In terms of domain architecture, S4 RNA-binding spans 332 to 395; it reads TRLVDVIVDL…KKRFVTVQVI (64 aa).

It belongs to the class-I aminoacyl-tRNA synthetase family. TyrS type 1 subfamily. In terms of assembly, homodimer.

Its subcellular location is the cytoplasm. The enzyme catalyses tRNA(Tyr) + L-tyrosine + ATP = L-tyrosyl-tRNA(Tyr) + AMP + diphosphate + H(+). In terms of biological role, catalyzes the attachment of tyrosine to tRNA(Tyr) in a two-step reaction: tyrosine is first activated by ATP to form Tyr-AMP and then transferred to the acceptor end of tRNA(Tyr). This Mycoplasma pneumoniae (strain ATCC 29342 / M129 / Subtype 1) (Mycoplasmoides pneumoniae) protein is Tyrosine--tRNA ligase.